The primary structure comprises 164 residues: Protein-export protein SecB (164 aa).

This sequence belongs to the SecB family. As to quaternary structure, homotetramer, a dimer of dimers. One homotetramer interacts with 1 SecA dimer.

It is found in the cytoplasm. One of the proteins required for the normal export of preproteins out of the cell cytoplasm. It is a molecular chaperone that binds to a subset of precursor proteins, maintaining them in a translocation-competent state. It also specifically binds to its receptor SecA. This is Protein-export protein SecB from Shewanella denitrificans (strain OS217 / ATCC BAA-1090 / DSM 15013).